The chain runs to 429 residues: UDP-N-acetylglucosamine 1-carboxyvinyltransferase (429 aa).

22–23 provides a ligand contact to phosphoenolpyruvate; sequence KN. Arg102 is a binding site for UDP-N-acetyl-alpha-D-glucosamine. Cys126 acts as the Proton donor in catalysis. Cys126 is subject to 2-(S-cysteinyl)pyruvic acid O-phosphothioketal. Residues 131–135, Asp316, and Ile338 contribute to the UDP-N-acetyl-alpha-D-glucosamine site; that span reads RPVDL.

It belongs to the EPSP synthase family. MurA subfamily.

Its subcellular location is the cytoplasm. It carries out the reaction phosphoenolpyruvate + UDP-N-acetyl-alpha-D-glucosamine = UDP-N-acetyl-3-O-(1-carboxyvinyl)-alpha-D-glucosamine + phosphate. The protein operates within cell wall biogenesis; peptidoglycan biosynthesis. Cell wall formation. Adds enolpyruvyl to UDP-N-acetylglucosamine. This chain is UDP-N-acetylglucosamine 1-carboxyvinyltransferase, found in Methylocella silvestris (strain DSM 15510 / CIP 108128 / LMG 27833 / NCIMB 13906 / BL2).